The sequence spans 483 residues: Glutamyl-tRNA(Gln) amidotransferase subunit A (483 aa).

Catalysis depends on charge relay system residues K76 and S151. The Acyl-ester intermediate role is filled by S175.

The protein belongs to the amidase family. GatA subfamily. In terms of assembly, heterotrimer of A, B and C subunits.

The catalysed reaction is L-glutamyl-tRNA(Gln) + L-glutamine + ATP + H2O = L-glutaminyl-tRNA(Gln) + L-glutamate + ADP + phosphate + H(+). In terms of biological role, allows the formation of correctly charged Gln-tRNA(Gln) through the transamidation of misacylated Glu-tRNA(Gln) in organisms which lack glutaminyl-tRNA synthetase. The reaction takes place in the presence of glutamine and ATP through an activated gamma-phospho-Glu-tRNA(Gln). This is Glutamyl-tRNA(Gln) amidotransferase subunit A from Pseudomonas putida (strain ATCC 47054 / DSM 6125 / CFBP 8728 / NCIMB 11950 / KT2440).